The primary structure comprises 125 residues: Small ribosomal subunit protein uS13 (125 aa).

Belongs to the universal ribosomal protein uS13 family. Part of the 30S ribosomal subunit. Forms a loose heterodimer with protein S19. Forms two bridges to the 50S subunit in the 70S ribosome.

Its function is as follows. Located at the top of the head of the 30S subunit, it contacts several helices of the 16S rRNA. In the 70S ribosome it contacts the 23S rRNA (bridge B1a) and protein L5 of the 50S subunit (bridge B1b), connecting the 2 subunits; these bridges are implicated in subunit movement. Contacts the tRNAs in the A and P-sites. In Rickettsia bellii (strain OSU 85-389), this protein is Small ribosomal subunit protein uS13.